Here is a 111-residue protein sequence, read N- to C-terminus: Large ribosomal subunit protein uL23 (111 aa).

It belongs to the universal ribosomal protein uL23 family. As to quaternary structure, part of the 50S ribosomal subunit. Contacts protein L29, and trigger factor when it is bound to the ribosome.

Its function is as follows. One of the early assembly proteins it binds 23S rRNA. One of the proteins that surrounds the polypeptide exit tunnel on the outside of the ribosome. Forms the main docking site for trigger factor binding to the ribosome. The sequence is that of Large ribosomal subunit protein uL23 from Nitrosospira multiformis (strain ATCC 25196 / NCIMB 11849 / C 71).